Consider the following 380-residue polypeptide: uncharacterized protein (380 aa).

In terms of domain architecture, Peptidase M14 spans 111-369; sequence APYSMERHHD…DCLAILAEMI (259 aa). Positions 164, 167, and 257 each coordinate Zn(2+). Residue Glu-333 is the Proton donor/acceptor of the active site.

Zn(2+) serves as cofactor.

This is an uncharacterized protein from Zymomonas mobilis subsp. mobilis (strain ATCC 31821 / ZM4 / CP4).